Reading from the N-terminus, the 104-residue chain is Large ribosomal subunit protein uL23 (104 aa).

Belongs to the universal ribosomal protein uL23 family. As to quaternary structure, part of the 50S ribosomal subunit. Contacts protein L29, and trigger factor when it is bound to the ribosome.

Functionally, one of the early assembly proteins it binds 23S rRNA. One of the proteins that surrounds the polypeptide exit tunnel on the outside of the ribosome. Forms the main docking site for trigger factor binding to the ribosome. In Paraburkholderia phytofirmans (strain DSM 17436 / LMG 22146 / PsJN) (Burkholderia phytofirmans), this protein is Large ribosomal subunit protein uL23.